The primary structure comprises 177 residues: Large ribosomal subunit protein uL6 (177 aa).

The protein belongs to the universal ribosomal protein uL6 family. Part of the 50S ribosomal subunit.

Functionally, this protein binds to the 23S rRNA, and is important in its secondary structure. It is located near the subunit interface in the base of the L7/L12 stalk, and near the tRNA binding site of the peptidyltransferase center. This Neisseria gonorrhoeae (strain ATCC 700825 / FA 1090) protein is Large ribosomal subunit protein uL6.